The chain runs to 135 residues: Small ribosomal subunit protein uS12 (135 aa).

Residues 1 to 20 form a disordered region; it reads MPTINQLVRKGRHSKVTKSK. Over residues 9–18 the composition is skewed to basic residues; the sequence is RKGRHSKVTK.

The protein belongs to the universal ribosomal protein uS12 family. In terms of assembly, part of the 30S ribosomal subunit. Contacts proteins S8 and S17. May interact with IF1 in the 30S initiation complex.

Functionally, with S4 and S5 plays an important role in translational accuracy. In terms of biological role, interacts with and stabilizes bases of the 16S rRNA that are involved in tRNA selection in the A site and with the mRNA backbone. Located at the interface of the 30S and 50S subunits, it traverses the body of the 30S subunit contacting proteins on the other side and probably holding the rRNA structure together. The combined cluster of proteins S8, S12 and S17 appears to hold together the shoulder and platform of the 30S subunit. This Lactobacillus acidophilus (strain ATCC 700396 / NCK56 / N2 / NCFM) protein is Small ribosomal subunit protein uS12.